A 333-amino-acid chain; its full sequence is Ribosomal RNA small subunit methyltransferase C (333 aa).

It belongs to the methyltransferase superfamily. RsmC family. In terms of assembly, monomer.

Its subcellular location is the cytoplasm. It carries out the reaction guanosine(1207) in 16S rRNA + S-adenosyl-L-methionine = N(2)-methylguanosine(1207) in 16S rRNA + S-adenosyl-L-homocysteine + H(+). Its function is as follows. Specifically methylates the guanine in position 1207 of 16S rRNA in the 30S particle. This Chromohalobacter salexigens (strain ATCC BAA-138 / DSM 3043 / CIP 106854 / NCIMB 13768 / 1H11) protein is Ribosomal RNA small subunit methyltransferase C.